The primary structure comprises 110 residues: Large ribosomal subunit protein uL22 (110 aa).

The protein belongs to the universal ribosomal protein uL22 family. In terms of assembly, part of the 50S ribosomal subunit.

Its function is as follows. This protein binds specifically to 23S rRNA; its binding is stimulated by other ribosomal proteins, e.g. L4, L17, and L20. It is important during the early stages of 50S assembly. It makes multiple contacts with different domains of the 23S rRNA in the assembled 50S subunit and ribosome. Functionally, the globular domain of the protein is located near the polypeptide exit tunnel on the outside of the subunit, while an extended beta-hairpin is found that lines the wall of the exit tunnel in the center of the 70S ribosome. The chain is Large ribosomal subunit protein uL22 from Paracidovorax citrulli (strain AAC00-1) (Acidovorax citrulli).